The following is a 531-amino-acid chain: Calcium-dependent protein kinase 21 (531 aa).

The segment covering 1-10 (MGCFSSKHRK) has biased composition (basic residues). The interval 1–62 (MGCFSSKHRK…STPSSNPVSV (62 aa)) is disordered. Residue Gly-2 is the site of N-myristoyl glycine attachment. Over residues 48 to 60 (IHQQISTPSSNPV) the composition is skewed to polar residues. Residues 80–338 (YSLGKELGRG…AAQVLEHPWI (259 aa)) form the Protein kinase domain. Residues 86 to 94 (LGRGQFGIT) and Lys-109 each bind ATP. Catalysis depends on Asp-204, which acts as the Proton acceptor. Position 244 is a phosphoserine (Ser-244). The autoinhibitory domain stretch occupies residues 343–373 (APDKPIDSAVLSRMKQFRAMNKLKKLALKVI). 4 consecutive EF-hand domains span residues 380–415 (EEIK…LGSR), 416–451 (LSET…RYKL), 452–487 (DRDE…YGMG), and 488–522 (DEAS…GSTQ). Ca(2+)-binding residues include Asp-393, Asp-395, Ser-397, Thr-399, Glu-404, Asp-429, Asp-431, Asn-433, Thr-435, Glu-440, Asp-465, Asp-467, Ser-469, His-471, Glu-476, Asp-500, Asp-502, Asp-504, Arg-506, and Glu-511.

Belongs to the protein kinase superfamily. Ser/Thr protein kinase family. CDPK subfamily. Interacts with SLAC1 and ABI1.

It localises to the cell membrane. The enzyme catalyses L-seryl-[protein] + ATP = O-phospho-L-seryl-[protein] + ADP + H(+). The catalysed reaction is L-threonyl-[protein] + ATP = O-phospho-L-threonyl-[protein] + ADP + H(+). With respect to regulation, activated by calcium. Autophosphorylation may play an important role in the regulation of the kinase activity. In terms of biological role, may play a role in signal transduction pathways that involve calcium as a second messenger. Mediates the phosphorylation and activation of the S-type anion efflux channel SLAC1. This chain is Calcium-dependent protein kinase 21 (CPK21), found in Arabidopsis thaliana (Mouse-ear cress).